The sequence spans 349 residues: Protein-glutamate methylesterase/protein-glutamine glutaminase (349 aa).

The Response regulatory domain maps to 5-122; the sequence is RVLSVDDSAL…REGMLAYSEM (118 aa). Position 56 is a 4-aspartylphosphate (D56). The 193-residue stretch at 152–344 folds into the CheB-type methylesterase domain; sequence LLSSEKLIAI…QQMLATISAG (193 aa). Catalysis depends on residues S164, H190, and D286.

This sequence belongs to the CheB family. Phosphorylated by CheA. Phosphorylation of the N-terminal regulatory domain activates the methylesterase activity.

It is found in the cytoplasm. The catalysed reaction is [protein]-L-glutamate 5-O-methyl ester + H2O = L-glutamyl-[protein] + methanol + H(+). It catalyses the reaction L-glutaminyl-[protein] + H2O = L-glutamyl-[protein] + NH4(+). In terms of biological role, involved in chemotaxis. Part of a chemotaxis signal transduction system that modulates chemotaxis in response to various stimuli. Catalyzes the demethylation of specific methylglutamate residues introduced into the chemoreceptors (methyl-accepting chemotaxis proteins or MCP) by CheR. Also mediates the irreversible deamidation of specific glutamine residues to glutamic acid. The polypeptide is Protein-glutamate methylesterase/protein-glutamine glutaminase (Shigella flexneri).